Reading from the N-terminus, the 484-residue chain is Oxysterol-binding protein-related protein 2 (484 aa).

Residues serine 19 and serine 20 each carry the phosphoserine modification. The interval 35-61 (DLDTSKSTRSGKNGEKPQQENGIQKHR) is disordered. Residues lysine 90 and 178–179 (HH) contribute to the a 1,2-diacyl-sn-glycero-3-phospho-(1D-myo-inositol-4,5-bisphosphate) site. Basic and acidic residues-rich tracts occupy residues 319–340 (KQEK…EKAN) and 424–450 (SQEK…EWRT). Disordered stretches follow at residues 319-348 (KQEK…GDVA) and 423-454 (ASQE…RWFS). 431-435 (EEKQR) contacts a 1,2-diacyl-sn-glycero-3-phospho-(1D-myo-inositol-4,5-bisphosphate).

The protein belongs to the OSBP family. As to quaternary structure, monomer. Homotetramer; phosphatidylinositol-4,5-bisphosphate binding promotes formation of stable tetramers. Interacts with DIAPH1. In terms of tissue distribution, detected in cochlea, in inner and outer hair cells in the organ of Corti (at protein level).

The protein localises to the cytoplasm. The protein resides in the cytosol. It localises to the lipid droplet. Its subcellular location is the cell membrane. In terms of biological role, intracellular transport protein that binds sterols and phospholipids and mediates lipid transport between intracellular compartments. Increases plasma membrane cholesterol levels and decreases phosphatidylinositol-4,5-bisphosphate levels in the cell membrane. Binds phosphoinositides, such as phosphatidylinositol-4,5-bisphosphate. Exhibits strong binding to phosphatidic acid and weak binding to phosphatidylinositol 3-phosphate. Binds cholesterol, dehydroergosterol, 22(R)-hydroxycholesterol and 25-hydroxycholesterol (in vitro). The polypeptide is Oxysterol-binding protein-related protein 2 (Osbpl2) (Mus musculus (Mouse)).